The sequence spans 316 residues: Taste receptor type 2 member 109 (316 aa).

The Extracellular segment spans residues 1–14 (MEHLLKRTFDITEN). The chain crosses the membrane as a helical span at residues 15-35 (ILLIILFIELIIGLIGNGFTA). Residues 36 to 62 (LVHCMDWVKRKKMSLVNKILTALATSR) lie on the Cytoplasmic side of the membrane. Residues 63 to 83 (IFLLWFMLVGFPISSLYPYLV) form a helical membrane-spanning segment. Residues 84–94 (TTRLMIQFTST) lie on the Extracellular side of the membrane. Residues 95–115 (LWTIANHISVWFATCLSVFYF) form a helical membrane-spanning segment. At 116–135 (LKIANFSNSPFLYLKRRVEK) the chain is on the cytoplasmic side. A helical transmembrane segment spans residues 136 to 156 (VVSVTLLVSLVLLFLNILLLN). Residues 157–191 (LEINMCINEYHQINISYIFISYYHLSCQIQVLGSH) are Extracellular-facing. Asparagine 170 carries an N-linked (GlcNAc...) asparagine glycan. The helical transmembrane segment at 192-212 (IIFLSVPVVLSLSTFLLLIFS) threads the bilayer. Topologically, residues 213-241 (LWTLHKRMQQHVQGGRDARTTAHFKALQA) are cytoplasmic. Residues 242-262 (VIAFLLLYSIFILSLLLQFWI) form a helical membrane-spanning segment. Topologically, residues 263 to 270 (HGLRKKPP) are extracellular. The chain crosses the membrane as a helical span at residues 271 to 291 (FIAFCQVVDTAFPSFHSYVLI). Residues 292–316 (LRDRKLRHASLSVLSWLKCRPNYVK) lie on the Cytoplasmic side of the membrane.

It belongs to the G-protein coupled receptor T2R family.

It is found in the membrane. Putative taste receptor which may play a role in the perception of bitterness. The sequence is that of Taste receptor type 2 member 109 from Mus musculus (Mouse).